The following is a 231-amino-acid chain: ATP-dependent dethiobiotin synthetase BioD 2 (231 aa).

13 to 18 is a binding site for ATP; it reads SVGKTV. Thr17 contacts Mg(2+). Lys38 is a catalytic residue. Residues Asp55, 112-115, 172-173, 201-203, and Gln208 contribute to the ATP site; these read EGTG, NR, and PYL. Residues Asp55 and Glu112 each contribute to the Mg(2+) site.

The protein belongs to the dethiobiotin synthetase family. In terms of assembly, homodimer. Mg(2+) is required as a cofactor.

It is found in the cytoplasm. It catalyses the reaction (7R,8S)-7,8-diammoniononanoate + CO2 + ATP = (4R,5S)-dethiobiotin + ADP + phosphate + 3 H(+). It participates in cofactor biosynthesis; biotin biosynthesis; biotin from 7,8-diaminononanoate: step 1/2. Catalyzes a mechanistically unusual reaction, the ATP-dependent insertion of CO2 between the N7 and N8 nitrogen atoms of 7,8-diaminopelargonic acid (DAPA, also called 7,8-diammoniononanoate) to form a ureido ring. This Escherichia coli O157:H7 protein is ATP-dependent dethiobiotin synthetase BioD 2.